The sequence spans 1299 residues: MSLQEMFRFPMGLLLGSVLLVASAPATLEPPGCSNKEQQVTVSHTYKIDVPKSALVQVDADPQPLSDDGASLLALGEAREEQNIIFRHNIRLQTPQKDCELAGSVQDLLARVKKLEEEMVEMKEQCSAQRCCQGVTDLSRHCSGHGTFSLETCSCHCEEGREGPACERLACPGACSGHGRCVDGRCLCHEPYVGADCGYPACPENCSGHGECVRGVCQCHEDFMSEDCSEKRCPGDCSGHGFCDTGECYCEEGFTGLDCAQVVTPQGLQLLKNTEDSLLVSWEPSSQVDHYLLSYYPLGKELSGKQIQVPKEQHSYEILGLLPGTKYIVTLRNVKNEVSSSPQHLLATTDLAVLGTAWVTDETENSLDVEWENPSTEVDYYKLRYGPMTGQEVAEVTVPKSSDPKSRYDITGLHPGTEYKITVVPMRGELEGKPILLNGRTEIDSPTNVVTDRVTEDTATVSWDPVQAVIDKYVVRYTSADGDTKEMAVHKDESSTVLTGLKPGEAYKVYVWAERGNQGSKKADTNALTEIDSPANLVTDRVTENTATISWDPVQATIDKYVVRYTSADDQETREVLVGKEQSSTVLTGLRPGVEYTVHVWAQKGDRESKKADTNAPTDIDSPKNLVTDRVTENMATVSWDPVQAAIDKYVVRYTSAGGETREVPVGKEQSSTVLTGLRPGMEYMVHVWAQKGDQESKKADTKAQTDIDSPQNLVTDRVTENMATVSWDPVRATIDRYVVRYTSAKDGETREVPVGKEQSSTVLTGLRPGVEYTVHVWAQKGAQESKKADTKAQTDIDSPQNLVTDWVTENTATVSWDPVQATIDRYVVHYTSANGETREVPVGKEQSSTVLTGLRPGMEYTVHVWAQKGNQESKKADTKAQTEIDGPKNLVTDWVTENMATVSWDPVQATIDKYMVRYTSADGETREVPVGKEHSSTVLTGLRPGMEYMVHVWAQKGAQESKKADTKAQTELDPPRNLRPSAVTQSGGILTWTPPSAQIHGYILTYQFPDGTVKEMQLGREDQRFALQGLEQGATYPVSLVAFKGGRRSRNVSTTLSTVGARFPHPSDCSQVQQNSNAASGLYTIYLHGDASRPLQVYCDMETDGGGWIVFQRRNTGQLDFFKRWRSYVEGFGDPMKEFWLGLDKLHNLTTGTPARYEVRVDLQTANESAYAIYDFFQVASSKERYKLTVGKYRGTAGDALTYHNGWKFTTFDRDNDIALSNCALTHHGGWWYKNCHLANPNGRYGETKHSEGVNWEPWKGHEFSIPYVELKIRPHGYSREPVLGRKKRTLRGRLRTF.

The signal sequence occupies residues methionine 1–leucine 28. EGF-like domains follow at residues glutamate 167–glycine 198, tyrosine 199–serine 229, and glutamate 230–alanine 260. Intrachain disulfides connect cysteine 171–cysteine 181, cysteine 175–cysteine 186, cysteine 188–cysteine 197, cysteine 202–cysteine 212, cysteine 206–cysteine 217, cysteine 219–cysteine 228, cysteine 233–cysteine 243, cysteine 237–cysteine 248, and cysteine 250–cysteine 259. Fibronectin type-III domains follow at residues threonine 264–alanine 352, valine 353–aspartate 444, serine 445–aspartate 532, serine 533–proline 623, lysine 624–aspartate 709, serine 710–proline 800, glutamine 801–aspartate 886, glycine 887–proline 976, and arginine 977–arginine 1063. The segment at glycine 605–lysine 624 is disordered. The span at glutamine 960–arginine 977 shows a compositional bias: basic and acidic residues. The disordered stretch occupies residues glutamine 960 to serine 982. Residues glycine 1061–glycine 1278 enclose the Fibrinogen C-terminal domain. Asparagine 1149 carries N-linked (GlcNAc...) asparagine glycosylation.

It belongs to the tenascin family. In terms of assembly, homohexamer. In terms of tissue distribution, not detected in normal adult mammary tissues or brain but expressed in most breast tumors and brain tumors, such as glioblastomas, astrocytomas and oligodendrogliomas, tested. In brain tumors, detected around the endothelial cell layer of the clood vessels.

It is found in the secreted. The protein resides in the extracellular space. The protein localises to the extracellular matrix. Its function is as follows. Extracellular matrix protein that seems to be a ligand for ITGA8:ITGB1, ITGAV:ITGB1 and ITGA4:ITGB1. Involved in neurite outgrowth and cell migration in hippocampal explants. During endochondral bone formation, inhibits proliferation and differentiation of proteoblasts mediated by canonical WNT signaling. In tumors, stimulates angiogenesis by elongation, migration and sprouting of endothelial cells. Expressed in most mammary tumors, may facilitate tumorigenesis by supporting the migratory behavior of breast cancer cells. This is Tenascin-N from Homo sapiens (Human).